We begin with the raw amino-acid sequence, 530 residues long: GMP synthase [glutamine-hydrolyzing] (530 aa).

The 202-residue stretch at Arg-4–Asp-205 folds into the Glutamine amidotransferase type-1 domain. Cys-84 functions as the Nucleophile in the catalytic mechanism. Active-site residues include His-179 and Glu-181. The region spanning Trp-206–Arg-398 is the GMPS ATP-PPase domain. Ser-233–Ser-239 contacts ATP.

As to quaternary structure, homodimer.

The catalysed reaction is XMP + L-glutamine + ATP + H2O = GMP + L-glutamate + AMP + diphosphate + 2 H(+). It functions in the pathway purine metabolism; GMP biosynthesis; GMP from XMP (L-Gln route): step 1/1. Catalyzes the synthesis of GMP from XMP. This Bordetella avium (strain 197N) protein is GMP synthase [glutamine-hydrolyzing].